The sequence spans 210 residues: Putative polysaccharide-binding protein (210 aa).

Positions 1 to 22 are cleaved as a signal peptide; sequence MGFLKGTAAALTLLSAAAAASA. 4 CBM1 domains span residues 23 to 62, 63 to 105, 125 to 165, and 166 to 210; these read CGVL…AMPG, MMGQ…LANK, CGKE…APPP, and KMGE…PMHP.

The protein is Putative polysaccharide-binding protein of Porphyra purpurea (Red seaweed).